A 146-amino-acid chain; its full sequence is Hemoglobin subunit beta (146 aa).

Residues 2–146 form the Globin domain; it reads HWSAEEKQLI…VAHALARKYH (145 aa). Residues H63 and H92 each coordinate heme b.

It belongs to the globin family. As to quaternary structure, heterotetramer of two alpha chains and two beta chains. In terms of tissue distribution, red blood cells.

Functionally, involved in oxygen transport from the lung to the various peripheral tissues. This is Hemoglobin subunit beta (HBB) from Anser indicus (Bar-headed goose).